Here is a 247-residue protein sequence, read N- to C-terminus: 2,3-bisphosphoglycerate-dependent phosphoglycerate mutase (247 aa).

Substrate-binding positions include 8–15, 21–22, Arg60, 87–90, Lys98, 114–115, and 183–184; these read RHGESVWN, TG, ERHY, RR, and GN. The Tele-phosphohistidine intermediate role is filled by His9. The Proton donor/acceptor role is filled by Glu87.

Belongs to the phosphoglycerate mutase family. BPG-dependent PGAM subfamily.

It catalyses the reaction (2R)-2-phosphoglycerate = (2R)-3-phosphoglycerate. Its pathway is carbohydrate degradation; glycolysis; pyruvate from D-glyceraldehyde 3-phosphate: step 3/5. Catalyzes the interconversion of 2-phosphoglycerate and 3-phosphoglycerate. The chain is 2,3-bisphosphoglycerate-dependent phosphoglycerate mutase from Thermobifida fusca (strain YX).